A 72-amino-acid chain; its full sequence is Exodeoxyribonuclease 7 small subunit (72 aa).

It belongs to the XseB family. Heterooligomer composed of large and small subunits.

The protein localises to the cytoplasm. The catalysed reaction is Exonucleolytic cleavage in either 5'- to 3'- or 3'- to 5'-direction to yield nucleoside 5'-phosphates.. Functionally, bidirectionally degrades single-stranded DNA into large acid-insoluble oligonucleotides, which are then degraded further into small acid-soluble oligonucleotides. This is Exodeoxyribonuclease 7 small subunit from Clostridium kluyveri (strain NBRC 12016).